A 308-amino-acid chain; its full sequence is GTPase Era (308 aa).

The Era-type G domain occupies 7 to 181; the sequence is RCGWVALIGP…LRLIVGYMPE (175 aa). The interval 15–22 is G1; it reads GPPNAGKS. 15 to 22 is a binding site for GTP; the sequence is GPPNAGKS. Positions 41 to 45 are G2; it reads QTTRN. The segment at 62–65 is G3; sequence DTPG. GTP-binding positions include 62-66 and 130-133; these read DTPGI and NKID. Residues 130-133 form a G4 region; it reads NKID. Positions 160-162 are G5; the sequence is ASA. The KH type-2 domain occupies 212–290; the sequence is LRQELPYSTA…HLELWVKVRE (79 aa).

Belongs to the TRAFAC class TrmE-Era-EngA-EngB-Septin-like GTPase superfamily. Era GTPase family. In terms of assembly, monomer.

It localises to the cytoplasm. Its subcellular location is the cell inner membrane. An essential GTPase that binds both GDP and GTP, with rapid nucleotide exchange. Plays a role in 16S rRNA processing and 30S ribosomal subunit biogenesis and possibly also in cell cycle regulation and energy metabolism. The sequence is that of GTPase Era from Nitratidesulfovibrio vulgaris (strain DP4) (Desulfovibrio vulgaris).